A 424-amino-acid polypeptide reads, in one-letter code: Dihydroorotase (424 aa).

The Zn(2+) site is built by histidine 60 and histidine 62. Substrate is bound by residues 62-64 (HFR) and asparagine 94. Positions 151, 178, and 231 each coordinate Zn(2+). Asparagine 277 lines the substrate pocket. Position 304 (aspartate 304) interacts with Zn(2+). The active site involves aspartate 304. Substrate is bound at residue histidine 308.

The protein belongs to the metallo-dependent hydrolases superfamily. DHOase family. Class I DHOase subfamily. It depends on Zn(2+) as a cofactor.

The enzyme catalyses (S)-dihydroorotate + H2O = N-carbamoyl-L-aspartate + H(+). It participates in pyrimidine metabolism; UMP biosynthesis via de novo pathway; (S)-dihydroorotate from bicarbonate: step 3/3. Its function is as follows. Catalyzes the reversible cyclization of carbamoyl aspartate to dihydroorotate. The protein is Dihydroorotase of Clostridium acetobutylicum (strain ATCC 824 / DSM 792 / JCM 1419 / IAM 19013 / LMG 5710 / NBRC 13948 / NRRL B-527 / VKM B-1787 / 2291 / W).